The sequence spans 123 residues: Putative membrane protein insertion efficiency factor (123 aa).

Residues 1-23 (MGSCGGKHTGKGAPKPYSRNFTD) are disordered.

The protein belongs to the UPF0161 family.

The protein resides in the cell inner membrane. Functionally, could be involved in insertion of integral membrane proteins into the membrane. This chain is Putative membrane protein insertion efficiency factor, found in Brucella abortus (strain 2308).